We begin with the raw amino-acid sequence, 236 residues long: Snake venom serine protease ussurin (236 aa).

Residues 1-227 enclose the Peptidase S1 domain; the sequence is VIGGVECNIN…YTDWIQSIIS (227 aa). Cys-28 and Cys-44 form a disulfide bridge. Residues His-43 and Asp-88 each act as charge relay system in the active site. 2 N-linked (GlcNAc...) asparagine glycosylation sites follow: Asn-99 and Asn-100. 3 cysteine pairs are disulfide-bonded: Cys-120–Cys-188, Cys-152–Cys-167, and Cys-178–Cys-203. Ser-182 serves as the catalytic Charge relay system.

It belongs to the peptidase S1 family. Snake venom subfamily. Monomer. As to expression, expressed by the venom gland.

It is found in the secreted. Snake venom serine protease that may act in the hemostasis system of the prey. The polypeptide is Snake venom serine protease ussurin (Gloydius ussuriensis (Ussuri mamushi)).